Reading from the N-terminus, the 788-residue chain is LPS-assembly protein LptD (788 aa).

Residues 1 to 24 form the signal peptide; the sequence is MKKRFPTLLATLIWTALYSQHTLA.

It belongs to the LptD family. As to quaternary structure, component of the lipopolysaccharide transport and assembly complex. Interacts with LptE and LptA.

Its subcellular location is the cell outer membrane. Its function is as follows. Together with LptE, is involved in the assembly of lipopolysaccharide (LPS) at the surface of the outer membrane. This Yersinia enterocolitica serotype O:8 / biotype 1B (strain NCTC 13174 / 8081) protein is LPS-assembly protein LptD.